A 189-amino-acid chain; its full sequence is Elongation factor P 2 (189 aa).

This sequence belongs to the elongation factor P family.

It is found in the cytoplasm. It functions in the pathway protein biosynthesis; polypeptide chain elongation. In terms of biological role, involved in peptide bond synthesis. Stimulates efficient translation and peptide-bond synthesis on native or reconstituted 70S ribosomes in vitro. Probably functions indirectly by altering the affinity of the ribosome for aminoacyl-tRNA, thus increasing their reactivity as acceptors for peptidyl transferase. In Lactobacillus acidophilus (strain ATCC 700396 / NCK56 / N2 / NCFM), this protein is Elongation factor P 2.